The chain runs to 360 residues: Peptide chain release factor 1 (360 aa).

The residue at position 235 (Gln235) is an N5-methylglutamine.

Belongs to the prokaryotic/mitochondrial release factor family. Post-translationally, methylated by PrmC. Methylation increases the termination efficiency of RF1.

Its subcellular location is the cytoplasm. Peptide chain release factor 1 directs the termination of translation in response to the peptide chain termination codons UAG and UAA. The protein is Peptide chain release factor 1 of Burkholderia vietnamiensis (strain G4 / LMG 22486) (Burkholderia cepacia (strain R1808)).